The sequence spans 762 residues: Multifunctional tryptophan biosynthesis protein (762 aa).

Positions Asn-25–Glu-224 constitute a Glutamine amidotransferase type-1 domain. Residue Gly-76–Gly-78 coordinates L-glutamine. Cys-104 serves as the catalytic Nucleophile; for GATase activity. Residues Gln-108 and Ser-154–Leu-155 contribute to the L-glutamine site. Residues His-198 and Glu-200 each act as for GATase activity in the active site. Residues Ile-251–Cys-515 form an indole-3-glycerol phosphate synthase region. Residues Leu-531–Arg-762 form an N-(5'-phosphoribosyl)anthranilate isomerase region.

Tetramer of two components I and two components II.

It carries out the reaction chorismate + L-glutamine = anthranilate + pyruvate + L-glutamate + H(+). The catalysed reaction is N-(5-phospho-beta-D-ribosyl)anthranilate = 1-(2-carboxyphenylamino)-1-deoxy-D-ribulose 5-phosphate. The enzyme catalyses 1-(2-carboxyphenylamino)-1-deoxy-D-ribulose 5-phosphate + H(+) = (1S,2R)-1-C-(indol-3-yl)glycerol 3-phosphate + CO2 + H2O. The protein operates within amino-acid biosynthesis; L-tryptophan biosynthesis; L-tryptophan from chorismate: step 1/5. It functions in the pathway amino-acid biosynthesis; L-tryptophan biosynthesis; L-tryptophan from chorismate: step 3/5. Its pathway is amino-acid biosynthesis; L-tryptophan biosynthesis; L-tryptophan from chorismate: step 4/5. In terms of biological role, trifunctional enzyme bearing the Gln amidotransferase (GATase) domain of anthranilate synthase, indole-glycerolphosphate synthase, and phosphoribosylanthranilate isomerase activities. The sequence is that of Multifunctional tryptophan biosynthesis protein (trp-1) from Neurospora crassa (strain ATCC 24698 / 74-OR23-1A / CBS 708.71 / DSM 1257 / FGSC 987).